A 392-amino-acid chain; its full sequence is 5-amino-6-(D-ribitylamino)uracil--L-tyrosine 4-hydroxyphenyl transferase (392 aa).

One can recognise a Radical SAM core domain in the interval 60-307 (VTYVVNRNIN…MAIARLYLGK (248 aa)). [4Fe-4S] cluster contacts are provided by Cys74, Cys78, and Cys81.

This sequence belongs to the radical SAM superfamily. CofH family. As to quaternary structure, consists of two subunits, CofG and CofH. It depends on [4Fe-4S] cluster as a cofactor.

It carries out the reaction 5-amino-6-(D-ribitylamino)uracil + L-tyrosine + S-adenosyl-L-methionine = 5-amino-5-(4-hydroxybenzyl)-6-(D-ribitylimino)-5,6-dihydrouracil + 2-iminoacetate + 5'-deoxyadenosine + L-methionine + H(+). The protein operates within cofactor biosynthesis; coenzyme F0 biosynthesis. Functionally, catalyzes the radical-mediated synthesis of 5-amino-5-(4-hydroxybenzyl)-6-(D-ribitylimino)-5,6-dihydrouracil from 5-amino-6-(D-ribitylamino)uracil and L-tyrosine. This chain is 5-amino-6-(D-ribitylamino)uracil--L-tyrosine 4-hydroxyphenyl transferase, found in Synechocystis sp. (strain ATCC 27184 / PCC 6803 / Kazusa).